The following is a 681-amino-acid chain: Replication protein E1 (681 aa).

The Nuclear localization signal signature appears at 88 to 90; it reads KRK. Phosphoserine; by host is present on residues Ser94, Ser98, and Ser111. Positions 110 to 119 match the Nuclear export signal motif; it reads LSPRLDAIKL. The tract at residues 124-221 is disordered; sequence AKAKRRLFEL…SDLQSTSTGK (98 aa). 2 stretches are compositionally biased toward polar residues: residues 138–158 and 170–184; these read YGQT…SSET and VVQS…NGRQ. The span at 185 to 207 shows a compositional bias: basic and acidic residues; sequence NNDEGSGRNVGEHGSQEEERAGG. Residues 218–384 are DNA-binding region; it reads STGKGAGGVV…QTMVGHAMED (167 aa). Residues 483–633 enclose the SF3 helicase domain; the sequence is VEFIPFLCAF…FPVTTQGEPM (151 aa). 509–516 contacts ATP; that stretch reads GPADTGKS. A Glycyl lysine isopeptide (Lys-Gly) (interchain with G-Cter in SUMO) cross-link involves residue Lys590. Positions 657-681 are disordered; sequence PEDEEEHGNPSEPFRCVPGQNARTI.

The protein belongs to the papillomaviridae E1 protein family. In terms of assembly, can form hexamers. Interacts with E2 protein; this interaction increases E1 DNA binding specificity. Interacts with host DNA polymerase subunit POLA2. Interacts with host single stranded DNA-binding protein RPA1. Interacts with host TOP1; this interaction stimulates the enzymatic activity of TOP1. Phosphorylated. Post-translationally, sumoylated.

It is found in the host nucleus. The enzyme catalyses Couples ATP hydrolysis with the unwinding of duplex DNA by translocating in the 3'-5' direction.. It carries out the reaction ATP + H2O = ADP + phosphate + H(+). ATP-dependent DNA 3'-5' helicase required for initiation of viral DNA replication. It forms a complex with the viral E2 protein. The E1-E2 complex binds to the replication origin which contains binding sites for both proteins. During the initial step, a dimer of E1 interacts with a dimer of protein E2 leading to a complex that binds the viral origin of replication with high specificity. Then, a second dimer of E1 displaces the E2 dimer in an ATP-dependent manner to form the E1 tetramer. Following this, two E1 monomers are added to each half of the site, which results in the formation of two E1 trimers on the viral ori. Subsequently, two hexamers will be created. The double hexamer acts as a bi-directional helicase machinery and unwinds the viral DNA and then recruits the host DNA polymerase to start replication. The chain is Replication protein E1 from Homo sapiens (Human).